Reading from the N-terminus, the 526-residue chain is 3',5'-cyclic-nucleotide phosphodiesterase 2 (526 aa).

The 345-residue stretch at 182–526 (RNIEFMSFLS…EYWMKHKKPQ (345 aa)) folds into the PDEase domain. The active-site Proton donor is histidine 265. Positions 269, 302, 303, and 400 each coordinate a divalent metal cation.

It belongs to the cyclic nucleotide phosphodiesterase family. As to quaternary structure, monomer. Requires a divalent metal cation as cofactor.

The catalysed reaction is 3',5'-cyclic AMP + H2O = AMP + H(+). Functionally, controls the level of cAMP in yeast cells, together with the low-affinity cAMP phosphodiesterase (PDE1). The protein is 3',5'-cyclic-nucleotide phosphodiesterase 2 of Saccharomyces cerevisiae (strain ATCC 204508 / S288c) (Baker's yeast).